The chain runs to 273 residues: MRQVAFYGKGGIGKSTTQQNTAAALASMGYRLMVVGCDPKADCTRLLLRGVRQPSVLDTLRDVGPESVQLEKVVVQGYGGVKCVESGGPEPGVGCGGRGVITAIQTLETLGAYKDDLDYVFYDVLGDVVCGGFAMPIREGYAEEIYIVCSGEYMALFAANNICKGIKKFAERGYARLGGLICNSRLVENERALVEEFARRLNTKMIHFVPRSKDVQRAEINKKTVIDYDPELPQAHEYRELARKIDENDEFTIPTPITQDELEDLMREYGIVD.

8 to 15 (GKGGIGKS) serves as a coordination point for ATP. Position 95 (cysteine 95) interacts with [4Fe-4S] cluster. Arginine 98 is subject to ADP-ribosylarginine; by dinitrogenase reductase ADP-ribosyltransferase. Cysteine 130 contacts [4Fe-4S] cluster.

Belongs to the NifH/BchL/ChlL family. As to quaternary structure, homodimer. The cofactor is [4Fe-4S] cluster. Post-translationally, the reversible ADP-ribosylation of Arg-98 inactivates the nitrogenase reductase and regulates nitrogenase activity.

It carries out the reaction N2 + 8 reduced [2Fe-2S]-[ferredoxin] + 16 ATP + 16 H2O = H2 + 8 oxidized [2Fe-2S]-[ferredoxin] + 2 NH4(+) + 16 ADP + 16 phosphate + 6 H(+). Functionally, the key enzymatic reactions in nitrogen fixation are catalyzed by the nitrogenase complex, which has 2 components: the iron protein and the molybdenum-iron protein. The chain is Nitrogenase iron protein from Roseiflexus sp. (strain RS-1).